Reading from the N-terminus, the 482-residue chain is tRNA sulfurtransferase (482 aa).

In terms of domain architecture, THUMP spans 61–165 (EAIRDALTRI…QDRLLLIKSR (105 aa)). ATP is bound by residues 183 to 184 (LI), K265, G287, and Q296. C344 and C456 are oxidised to a cystine. One can recognise a Rhodanese domain in the interval 404-482 (FVPTDVLLDI…GFSNVKVYRP (79 aa)). Catalysis depends on C456, which acts as the Cysteine persulfide intermediate.

The protein belongs to the ThiI family.

The protein localises to the cytoplasm. The enzyme catalyses [ThiI sulfur-carrier protein]-S-sulfanyl-L-cysteine + a uridine in tRNA + 2 reduced [2Fe-2S]-[ferredoxin] + ATP + H(+) = [ThiI sulfur-carrier protein]-L-cysteine + a 4-thiouridine in tRNA + 2 oxidized [2Fe-2S]-[ferredoxin] + AMP + diphosphate. It catalyses the reaction [ThiS sulfur-carrier protein]-C-terminal Gly-Gly-AMP + S-sulfanyl-L-cysteinyl-[cysteine desulfurase] + AH2 = [ThiS sulfur-carrier protein]-C-terminal-Gly-aminoethanethioate + L-cysteinyl-[cysteine desulfurase] + A + AMP + 2 H(+). It participates in cofactor biosynthesis; thiamine diphosphate biosynthesis. In terms of biological role, catalyzes the ATP-dependent transfer of a sulfur to tRNA to produce 4-thiouridine in position 8 of tRNAs, which functions as a near-UV photosensor. Also catalyzes the transfer of sulfur to the sulfur carrier protein ThiS, forming ThiS-thiocarboxylate. This is a step in the synthesis of thiazole, in the thiamine biosynthesis pathway. The sulfur is donated as persulfide by IscS. The chain is tRNA sulfurtransferase from Pectobacterium atrosepticum (strain SCRI 1043 / ATCC BAA-672) (Erwinia carotovora subsp. atroseptica).